The primary structure comprises 217 residues: NADPH-dependent 3-demethoxyubiquinone 3-hydroxylase, mitochondrial (217 aa).

A mitochondrion-targeting transit peptide spans 1–35 (MSCAGAAAAPRLWRLRPGARRSLSAYGRRTSVRFR). The segment at 11–29 (RLWRLRPGARRSLSAYGRR) is required for nuclear localization. Repeat copies occupy residues 48-129 (AVDR…TALL) and 130-217 (GKEG…SERL). The 2 X approximate tandem repeats stretch occupies residues 48-217 (AVDRIIRVDH…RVAIYLSERL (170 aa)). R51 lines the NADH pocket. Fe cation contacts are provided by E60, E90, H93, E142, E178, and H181. 2 residues coordinate NADH: Y212 and R216.

The protein belongs to the COQ7 family. As to quaternary structure, component of a multi-subunit COQ enzyme complex. Interacts with COQ8B and COQ6. Interacts with COQ9. The cofactor is Fe cation. As to expression, expressed dominantly in heart and skeletal muscle.

Its subcellular location is the mitochondrion inner membrane. It is found in the mitochondrion. The protein resides in the nucleus. The protein localises to the chromosome. It carries out the reaction a 5-methoxy-2-methyl-3-(all-trans-polyprenyl)benzoquinone + NADH + O2 = a 3-demethylubiquinone + NAD(+) + H2O. Its pathway is cofactor biosynthesis; ubiquinone biosynthesis. Catalyzes the hydroxylation of the 5-methoxy-2-methyl-3-(all-trans-polyprenyl)benzoquinone at the C6 position and participates in the biosynthesis of ubiquinone. Catalyzes the reaction through a substrate-mediated reduction pathway, whereby NADH shuttles electrons to 5-methoxy-2-methyl-3-(all-trans-decaprenyl)benzoquinone, which then transfers the electrons to the two Fe(3+) centers. The binding of 5-methoxy-2-methyl-3-(all-trans-polyprenyl)benzoquinone (DMQn) mediates reduction of the diiron center by nicotinamide adenine dinucleotide (NADH) and initiates oxygen activation for subsequent DMQ hydroxylation. The physiological substrates are 5-methoxy-2-methyl-3-(all-trans-nonaprenyl)benzoquinone (DMQ(9)) and 5-methoxy-2-methyl-3-(all-trans-decaprenyl)benzoquinone (DMQ(10)), however in vitro the enzyme does not have any specificity concerning the length of the polyprenyl tail, and accepts tails of various lengths with similar efficiency. Also has a structural role in the COQ enzyme complex, stabilizing other COQ polypeptides. Involved in lifespan determination in a ubiquinone-independent manner. Plays a role in modulating mitochondrial stress responses, acting in the nucleus, perhaps via regulating gene expression, independent of its characterized mitochondrial function in ubiquinone biosynthesis. The chain is NADPH-dependent 3-demethoxyubiquinone 3-hydroxylase, mitochondrial from Homo sapiens (Human).